Consider the following 336-residue polypeptide: Biotin synthase (336 aa).

In terms of domain architecture, Radical SAM core spans 36-263 (TKVQISTLLS…ESHVRLAAGR (228 aa)). Residues Cys-51, Cys-55, and Cys-58 each coordinate [4Fe-4S] cluster. Cys-95, Cys-126, Cys-186, and Arg-258 together coordinate [2Fe-2S] cluster.

Belongs to the radical SAM superfamily. Biotin synthase family. As to quaternary structure, homodimer. It depends on [4Fe-4S] cluster as a cofactor. The cofactor is [2Fe-2S] cluster.

The enzyme catalyses (4R,5S)-dethiobiotin + (sulfur carrier)-SH + 2 reduced [2Fe-2S]-[ferredoxin] + 2 S-adenosyl-L-methionine = (sulfur carrier)-H + biotin + 2 5'-deoxyadenosine + 2 L-methionine + 2 oxidized [2Fe-2S]-[ferredoxin]. It functions in the pathway cofactor biosynthesis; biotin biosynthesis; biotin from 7,8-diaminononanoate: step 2/2. Its function is as follows. Catalyzes the conversion of dethiobiotin (DTB) to biotin by the insertion of a sulfur atom into dethiobiotin via a radical-based mechanism. This Gluconobacter oxydans (strain 621H) (Gluconobacter suboxydans) protein is Biotin synthase.